Reading from the N-terminus, the 107-residue chain is Ferredoxin 1 (107 aa).

2 4Fe-4S ferredoxin-type domains span residues 2–30 (TFVV…YEGP) and 31–60 (NFLV…SEDE). Positions 9 and 17 each coordinate [3Fe-4S] cluster. Residues Cys-21, Cys-40, Cys-43, and Cys-46 each coordinate [4Fe-4S] cluster. Position 50 (Cys-50) interacts with [3Fe-4S] cluster.

[4Fe-4S] cluster serves as cofactor. Requires [3Fe-4S] cluster as cofactor.

Functionally, ferredoxins are iron-sulfur proteins that transfer electrons in a wide variety of metabolic reactions. The polypeptide is Ferredoxin 1 (fdxA) (Pseudomonas putida (strain ATCC 47054 / DSM 6125 / CFBP 8728 / NCIMB 11950 / KT2440)).